Reading from the N-terminus, the 215-residue chain is Adenylate kinase (215 aa).

10–15 (GAGKGT) contributes to the ATP binding site. Residues 30–59 (STGDMFRAAIKDQTPLGQEAKSYMDKGELV) form an NMP region. AMP contacts are provided by residues threonine 31, arginine 36, 57 to 59 (ELV), 85 to 88 (GFPR), and glutamine 92. Residues 126–163 (GRRICPTCGATYHVIYNPPKVEGVCDIDGSALVQREDD) are LID. Arginine 127 contributes to the ATP binding site. Residues cysteine 130 and cysteine 133 each coordinate Zn(2+). 136 to 137 (TY) contacts ATP. Zn(2+)-binding residues include cysteine 150 and aspartate 153. The AMP site is built by arginine 160 and arginine 171. Arginine 199 lines the ATP pocket.

This sequence belongs to the adenylate kinase family. As to quaternary structure, monomer.

It localises to the cytoplasm. It catalyses the reaction AMP + ATP = 2 ADP. Its pathway is purine metabolism; AMP biosynthesis via salvage pathway; AMP from ADP: step 1/1. Catalyzes the reversible transfer of the terminal phosphate group between ATP and AMP. Plays an important role in cellular energy homeostasis and in adenine nucleotide metabolism. The chain is Adenylate kinase from Exiguobacterium sibiricum (strain DSM 17290 / CCUG 55495 / CIP 109462 / JCM 13490 / 255-15).